Consider the following 810-residue polypeptide: Abnormal pharyngeal pumping eat-20 (810 aa).

Positions 1 to 20 are cleaved as a signal peptide; sequence MTTFCRVLLIFGIYVAVCCA. Over 21 to 748 the chain is Extracellular; it reads QSVEDDVFHF…GKQSSAAASW (728 aa). 3 N-linked (GlcNAc...) asparagine glycosylation sites follow: asparagine 90, asparagine 171, and asparagine 232. EGF-like domains follow at residues 220–257, 258–293, and 301–335; these read PPSP…DRCE, LDVC…LLCE, and VAPI…ANCN. 9 disulfides stabilise this stretch: cysteine 224–cysteine 235, cysteine 229–cysteine 245, cysteine 247–cysteine 256, cysteine 261–cysteine 272, cysteine 266–cysteine 281, cysteine 283–cysteine 292, cysteine 305–cysteine 314, cysteine 309–cysteine 323, and cysteine 325–cysteine 334. The N-linked (GlcNAc...) asparagine glycan is linked to asparagine 371. The segment covering 522–531 has biased composition (low complexity); the sequence is FAPTTGTQQP. 2 disordered regions span residues 522 to 567 and 684 to 738; these read FAPT…STMQ and PHPQ…HTSS. A compositionally biased stretch (acidic residues) spans 542-558; it reads DENEEEEEEETTEETEE. Residues 749 to 769 form a helical membrane-spanning segment; sequence IIAIIALIVLGLLLLATSLFI. Topologically, residues 770-810 are cytoplasmic; that stretch reads LRYIRQSRKLHGKYNPAREEHNLSAAYAMPMSHIAKEERLI.

As to expression, highly expressed in the pharynx, circumpharyngeal cells, pharyngeal-intestinal valve and a subset of neurons in larval and embryonic stages. Also moderately expressed in the lining of the intestine, coelomocytes, labial process bundles and some hypodermal cells. In adults, it is predominantly expressed in the pharynx, the pharyngeal-intenstinal valve, some circumpharyngeal cells, m3, m4 and m6 pharyngeal muscles, and IL1, OLQ, BAG and ALN neurons. Weaker expression is observed in labial process bundles, coelomocytes, the ventral hypodermal ridge, the vulval hypodermis and the sensory rays of the adult male tail.

Its subcellular location is the membrane. Regulates pharyngeal pumping during feeding. The protein is Abnormal pharyngeal pumping eat-20 (eat-20) of Caenorhabditis elegans.